The primary structure comprises 383 residues: 8-amino-7-oxononanoate synthase (383 aa).

Residue arginine 22 coordinates substrate. Pyridoxal 5'-phosphate is bound at residue 109–110 (GF). Histidine 134 lines the substrate pocket. Positions 178, 206, and 232 each coordinate pyridoxal 5'-phosphate. Lysine 235 bears the N6-(pyridoxal phosphate)lysine mark. Threonine 348 contacts substrate.

It belongs to the class-II pyridoxal-phosphate-dependent aminotransferase family. BioF subfamily. Homodimer. It depends on pyridoxal 5'-phosphate as a cofactor.

It catalyses the reaction 6-carboxyhexanoyl-[ACP] + L-alanine + H(+) = (8S)-8-amino-7-oxononanoate + holo-[ACP] + CO2. It functions in the pathway cofactor biosynthesis; biotin biosynthesis. Its function is as follows. Catalyzes the decarboxylative condensation of pimeloyl-[acyl-carrier protein] and L-alanine to produce 8-amino-7-oxononanoate (AON), [acyl-carrier protein], and carbon dioxide. This is 8-amino-7-oxononanoate synthase from Vibrio parahaemolyticus serotype O3:K6 (strain RIMD 2210633).